The chain runs to 639 residues: Lipoteichoic acid synthase 1 (639 aa).

Topologically, residues 1–3 (MKK) are cytoplasmic. A helical membrane pass occupies residues 4 to 24 (LFSYKLSFFVLAVILFWAKTY). Topologically, residues 25–41 (LSYKTEFNLGVKGTTQE) are extracellular. The chain crosses the membrane as a helical span at residues 42–62 (ILLIFNPFSSAVFFLGLALLA). Residues 63–67 (KGRKS) lie on the Cytoplasmic side of the membrane. A helical transmembrane segment spans residues 68–88 (AIIMLIIDFLMTFVLYANILF). The Extracellular portion of the chain corresponds to 89-116 (YRFFDDFLTFPNIKQSGNVGNMGDGIFS). Residues 117–137 (IMAGHDIFYFLDIIILIAVLI) form a helical membrane-spanning segment. Residues 138–150 (WRPELKEYKMKKR) lie on the Cytoplasmic side of the membrane. Residues 151-171 (FASLVILSGIALFFINLHYAE) form a helical membrane-spanning segment. Residues 172–639 (KDRPQLLTRT…YHYGKEKEIK (468 aa)) are Extracellular-facing. Residues glutamate 252 and threonine 297 each contribute to the Mn(2+) site. Residue threonine 297 is part of the active site. Substrate is bound at residue histidine 413. Residues aspartate 472 and histidine 473 each contribute to the Mn(2+) site.

It belongs to the LTA synthase family. Post-translationally, proteolytically cleaved by the type I signal peptidases SipT and SipV.

It is found in the cell membrane. The protein resides in the secreted. The protein operates within cell wall biogenesis; lipoteichoic acid biosynthesis. Its function is as follows. Catalyzes the polymerization of lipoteichoic acid (LTA) polyglycerol phosphate, a reaction that presumably uses phosphatidylglycerol (PG) as substrate. The protein is Lipoteichoic acid synthase 1 (ltaS1) of Bacillus subtilis (strain 168).